Consider the following 418-residue polypeptide: E3 ubiquitin-protein ligase makorin-2 (418 aa).

C3H1-type zinc fingers lie at residues 2-29 and 31-58; these read NTKHVTCRYFLHGVCREGGRCLFSHDLA and SKPSTVCRFYQRGQCAYGARCRYDHVKP. The disordered stretch occupies residues 76–100; it reads ESTPPLLPTQEAAAPVTKSAPQRRE. Residues 164–191 form a C3H1-type 3 zinc finger; it reads DAPQQLCPFAQAGGCHYGESCPYIHGNV. The tract at residues 192–221 is makorin-type Cys-His; it reads CEICGLQVLHPYDQEQRGHHEKLCMANFER. The RING-type zinc-finger motif lies at 237 to 291; the sequence is CSICMERVYDKQSPSERRFGILSNCHHTYCLACIRQWRCARQFENPVIKSCPECR. A C3H1-type 4 zinc finger spans residues 320–349; that stretch reads GMGKKACKYFDQGRGTCPFGGKCLYLHAYP.

It is found in the cytoplasm. It localises to the nucleus. The catalysed reaction is S-ubiquitinyl-[E2 ubiquitin-conjugating enzyme]-L-cysteine + [acceptor protein]-L-lysine = [E2 ubiquitin-conjugating enzyme]-L-cysteine + N(6)-ubiquitinyl-[acceptor protein]-L-lysine.. It participates in protein modification; protein ubiquitination. E3 ubiquitin ligase catalyzing the covalent attachment of ubiquitin moieties onto substrate proteins. Inhibits neurogenesis and axis formation during embryonic development by modulating the phosphatidylinositol 3-kinase (PI3K) pathway. Acts downstream of PI3K and akt1 to up-regulate gsk3b mRNA expression. The chain is E3 ubiquitin-protein ligase makorin-2 (mkrn2) from Xenopus tropicalis (Western clawed frog).